Reading from the N-terminus, the 462-residue chain is Argininosuccinate lyase (462 aa).

Belongs to the lyase 1 family. Argininosuccinate lyase subfamily.

The protein resides in the cytoplasm. It carries out the reaction 2-(N(omega)-L-arginino)succinate = fumarate + L-arginine. The protein operates within amino-acid biosynthesis; L-arginine biosynthesis; L-arginine from L-ornithine and carbamoyl phosphate: step 3/3. This chain is Argininosuccinate lyase, found in Bacillus anthracis (strain A0248).